The chain runs to 329 residues: SLAM family member 5 (329 aa).

The signal sequence occupies residues 1-21; that stretch reads MAQRHLWIWFLCLQTWSEAAG. Residues 22–221 are Extracellular-facing; it reads KDADPMVMNG…TPSFHPRHAV (200 aa). Residues 26-129 form the Ig-like V-type domain; that stretch reads PMVMNGILGE…IYYLHIYRRL (104 aa). The Ig-like C2-type domain maps to 132–206; sequence PKITQSLISS…SNSSDSVTVQ (75 aa). An N-linked (GlcNAc...) asparagine glycan is attached at Asn147. Cys152 and Cys190 are joined by a disulfide. Residues 222-242 form a helical membrane-spanning segment; sequence LPGGLAVLFLLILIPMLAFLF. Over 243–329 the chain is Cytoplasmic; the sequence is RLYKRRRDRI…PKALGNEIVV (87 aa). Residues 263-268 carry the ITSM 1 motif; that stretch reads TVYAVV. Tyr265 carries the phosphotyrosine modification. Phosphotyrosine; by LYN is present on Tyr280. The short motif at 298-303 is the ITSM 2 element; the sequence is TIYSSV. Tyr300 bears the Phosphotyrosine mark.

Homodimer; via its extracellular domain. Forms a head to tail dimer with a CD48 molecule from another cell. Interacts with SH2 domain-containing proteins SH2D1A/SAP and SH2D1B/EAT-2. Interacts with tyrosine-protein phosphatases PTPN6/SHP-1 and PTPN11/SHP-2 via its phosphorylated cytoplasmic domain, and this interaction is blocked by SH2D1A. In terms of processing, phosphorylated by tyrosine-protein kinase LCK on tyrosine residues following ligation induced by agonist monoclonal antibody. The association with SH2D1A/SAP is dependent of tyrosine phosphorylation of its cytoplasmic domain. Phosphorylated on Tyr-280 and Tyr-300 following platelet aggregation. Phosphorylated on tyrosine residues upon high affinity immunoglobulin epsilon receptor aggregation in mast cells. N-glycosylated. In terms of tissue distribution, predominantly expressed in hematopoietic tissues such as lymph node, spleen, thymus, and bone marrow. Detected also in lung.

It is found in the cell membrane. Its function is as follows. Self-ligand receptor of the signaling lymphocytic activation molecule (SLAM) family. SLAM receptors triggered by homo- or heterotypic cell-cell interactions are modulating the activation and differentiation of a wide variety of immune cells and thus are involved in the regulation and interconnection of both innate and adaptive immune response. Activities are controlled by presence or absence of small cytoplasmic adapter proteins, SH2D1A/SAP and/or SH2D1B/EAT-2. Can mediate natural killer (NK) cell cytotoxicity dependent on SH2D1A and SH2D1B. Increases proliferative responses of activated T-cells and SH2D1A/SAP does not seen be required for this process. Homophilic interactions enhance interferon gamma/IFNG secretion in lymphocytes and induce platelet stimulation via a SH2D1A/SAP-dependent pathway. May serve as a marker for hematopoietic progenitor cells. Required for a prolonged T-cell:B-cell contact, optimal T follicular helper function, and germinal center formation. In germinal centers involved in maintaining B cell tolerance and in preventing autoimmunity. In mast cells negatively regulates high affinity immunoglobulin epsilon receptor signaling; independent of SH2D1A and SH2D1B but implicating FES and PTPN6/SHP-1. In macrophages enhances LPS-induced MAPK phosphorylation and NF-kappaB activation and modulates LPS-induced cytokine secretion; involving ITSM 2. Positively regulates macroautophagy in primary dendritic cells via stabilization of IRF8; inhibits TRIM21-mediated proteasomal degradation of IRF8. In Mus musculus (Mouse), this protein is SLAM family member 5 (Cd84).